The sequence spans 101 residues: Apolipoprotein C-II (101 aa).

The signal sequence occupies residues 1–22; it reads MGIRYLLVLVLVLLVLGCEVQG. The lipid binding stretch occupies residues 66 to 74; it reads TVDEKIREI. Positions 78–101 are lipoprotein lipase cofactor; it reads STAAVSTYAGIFTDQLLSMLKGDQ.

Belongs to the apolipoprotein C2 family. In terms of processing, proapolipoprotein C-II is synthesized as a sialic acid containing glycoprotein which is subsequently desialylated prior to its proteolytic processing. Proapolipoprotein C-II, the major form found in plasma undergoes proteolytic cleavage of its N-terminal hexapeptide to generate apolipoprotein C-II, which occurs as the minor form in plasma.

Its subcellular location is the secreted. In terms of biological role, component of chylomicrons, very low-density lipoproteins (VLDL), low-density lipoproteins (LDL), and high-density lipoproteins (HDL) in plasma. Plays an important role in lipoprotein metabolism as an activator of lipoprotein lipase. Both proapolipoprotein C-II and apolipoprotein C-II can activate lipoprotein lipase. This chain is Apolipoprotein C-II (APOC2), found in Mirounga angustirostris (Northern elephant seal).